Consider the following 372-residue polypeptide: MKLMLGLLLLPLTLVHASPATPEPCELDQDEESVRCYCNFSDPQPNWSSAFLCAGAEDVEFYGGGRSLEYLLKRVDTEANLGQYTDIIRSLPLKRLTVRSARVPTQILFGTLRVLGYSGLRELTLENLEVTGTALSPLLDATGPDLNTLSLRNVSWATTDTWLAELQQWLKPGLKVLSIAQAHSLNFSCKQVGVFPALATLDLSDNPELGEKGLISALCPHKFPTLQVLALRNAGMETTSGVCSALAAARVPLQALDLSHNSLRDTAGTPSCDWPSQLNSLNLSFTGLEHVPKGLPAKLSVLDLSYNRLDRKPRPEELPEVGSLSLTGNPFLHSESQSEAYNSGVVIATALSPGSAGLSGTLALLLGHRLFV.

Positions Met1–Ala17 are cleaved as a signal peptide. 2 disulfide bridges follow: Cys25–Cys38 and Cys36–Cys53. Residues Asn39 and Asn46 are each glycosylated (N-linked (GlcNAc...) asparagine). LRR repeat units follow at residues Glu57–Tyr84, Thr85–Leu120, Arg121–Leu146, Asn147–Leu174, Lys175–Leu198, Ala199–Leu226, Gln227–Leu253, Gln254–Leu278, Asn279–Leu299, Ser300–Val321, and Gly322–Val346. 2 N-linked (GlcNAc...) asparagine glycosylation sites follow: Asn153 and Asn186. 2 disulfides stabilise this stretch: Cys189-Cys219 and Cys243-Cys272. A glycan (N-linked (GlcNAc...) asparagine) is linked at Asn282. The interval His290 to Val372 is required for response to bacterial lipopolysaccharide (LPS). Asn342 is lipidated: GPI-anchor amidated asparagine. A propeptide spans Ser343–Val372 (removed in mature form).

In terms of assembly, belongs to the lipopolysaccharide (LPS) receptor, a multi-protein complex containing at least CD14, LY96 and TLR4. Interacts with LPS-bound LPB. Interacts with LPAR1. Interacts with the TLR2:TLR6 or TLR2:TLR1 heterodimers; upon interaction with ligands such as diacylated lipopeptides and triacylated lipopeptides, respectively. Interacts with MYO18A. Interacts with FSTL1. As to expression, detected in macrophages and peripheral blood monocytes.

It is found in the cell membrane. The protein resides in the secreted. Its subcellular location is the membrane raft. The protein localises to the golgi apparatus. Functionally, coreceptor for bacterial lipopolysaccharide. In concert with LBP, binds to monomeric lipopolysaccharide and delivers it to the LY96/TLR4 complex, thereby mediating the innate immune response to bacterial lipopolysaccharide (LPS). Acts via MyD88, TIRAP and TRAF6, leading to NF-kappa-B activation, cytokine secretion and the inflammatory response. Acts as a coreceptor for TLR2:TLR6 heterodimer in response to diacylated lipopeptides and for TLR2:TLR1 heterodimer in response to triacylated lipopeptides, these clusters trigger signaling from the cell surface and subsequently are targeted to the Golgi in a lipid-raft dependent pathway. Binds electronegative LDL (LDL(-)) and mediates the cytokine release induced by LDL(-). In Rattus norvegicus (Rat), this protein is Monocyte differentiation antigen CD14 (Cd14).